Reading from the N-terminus, the 481-residue chain is Methylenetetrahydrofolate--tRNA-(uracil-5-)-methyltransferase TrmFO (481 aa).

13-18 (GGGLAG) serves as a coordination point for FAD.

It belongs to the MnmG family. TrmFO subfamily. Requires FAD as cofactor.

It localises to the cytoplasm. It catalyses the reaction uridine(54) in tRNA + (6R)-5,10-methylene-5,6,7,8-tetrahydrofolate + NADH + H(+) = 5-methyluridine(54) in tRNA + (6S)-5,6,7,8-tetrahydrofolate + NAD(+). It carries out the reaction uridine(54) in tRNA + (6R)-5,10-methylene-5,6,7,8-tetrahydrofolate + NADPH + H(+) = 5-methyluridine(54) in tRNA + (6S)-5,6,7,8-tetrahydrofolate + NADP(+). Catalyzes the folate-dependent formation of 5-methyl-uridine at position 54 (M-5-U54) in all tRNAs. This Agrobacterium fabrum (strain C58 / ATCC 33970) (Agrobacterium tumefaciens (strain C58)) protein is Methylenetetrahydrofolate--tRNA-(uracil-5-)-methyltransferase TrmFO.